The chain runs to 157 residues: uncharacterized protein (157 aa).

Disordered stretches follow at residues 76 to 105 and 132 to 157; these read AINQ…GPRG and VRAP…RMRG. Residues 135–148 show a composition bias toward low complexity; that stretch reads PSTKPSKTSSSNNP.

This sequence to M.pneumoniae MPN_091 and MPN_413.

This is an uncharacterized protein from Mycoplasma pneumoniae (strain ATCC 29342 / M129 / Subtype 1) (Mycoplasmoides pneumoniae).